Here is a 181-residue protein sequence, read N- to C-terminus: Putative poly [ADP-ribose] polymerase-like 100L (181 aa).

The region spanning 1–181 is the PARP catalytic domain; sequence MDNLKEEETN…KIKYIIHITK (181 aa).

It catalyses the reaction NAD(+) + (ADP-D-ribosyl)n-acceptor = nicotinamide + (ADP-D-ribosyl)n+1-acceptor + H(+).. The polypeptide is Putative poly [ADP-ribose] polymerase-like 100L (Invertebrate iridescent virus 6 (IIV-6)).